The sequence spans 97 residues: Aspartyl/glutamyl-tRNA(Asn/Gln) amidotransferase subunit C (97 aa).

Belongs to the GatC family. In terms of assembly, heterotrimer of A, B and C subunits.

The catalysed reaction is L-glutamyl-tRNA(Gln) + L-glutamine + ATP + H2O = L-glutaminyl-tRNA(Gln) + L-glutamate + ADP + phosphate + H(+). It carries out the reaction L-aspartyl-tRNA(Asn) + L-glutamine + ATP + H2O = L-asparaginyl-tRNA(Asn) + L-glutamate + ADP + phosphate + 2 H(+). Its function is as follows. Allows the formation of correctly charged Asn-tRNA(Asn) or Gln-tRNA(Gln) through the transamidation of misacylated Asp-tRNA(Asn) or Glu-tRNA(Gln) in organisms which lack either or both of asparaginyl-tRNA or glutaminyl-tRNA synthetases. The reaction takes place in the presence of glutamine and ATP through an activated phospho-Asp-tRNA(Asn) or phospho-Glu-tRNA(Gln). The sequence is that of Aspartyl/glutamyl-tRNA(Asn/Gln) amidotransferase subunit C from Prochlorococcus marinus (strain MIT 9303).